Here is a 150-residue protein sequence, read N- to C-terminus: Ribonuclease H (150 aa).

In terms of domain architecture, RNase H type-1 spans 7–148 (ERPRVEIWTD…VDQLATRGRE (142 aa)). 4 residues coordinate Mg(2+): Asp-16, Glu-54, Asp-76, and Asp-140.

Belongs to the RNase H family. In terms of assembly, monomer. Mg(2+) serves as cofactor.

Its subcellular location is the cytoplasm. The catalysed reaction is Endonucleolytic cleavage to 5'-phosphomonoester.. In terms of biological role, endonuclease that specifically degrades the RNA of RNA-DNA hybrids. This chain is Ribonuclease H, found in Gluconobacter oxydans (strain 621H) (Gluconobacter suboxydans).